The primary structure comprises 287 residues: Movement protein BC1 (287 aa).

It belongs to the begomovirus movement protein BC1 family. As to quaternary structure, binds to dimeric supercoiled plasmid DNA. Phosphorylated.

It is found in the host cell membrane. Its subcellular location is the host microsome membrane. The protein localises to the host endoplasmic reticulum membrane. In terms of biological role, transports viral genome to neighboring plant cells directly through plasmosdesmata, without any budding. The movement protein allows efficient cell to cell propagation, by bypassing the host cell wall barrier. Begomovirus genome is shuttled out of nucleus by Nuclear shuttle protein (NSP) and the movement protein transports the DNA-NSP complex to cell plasmodesmata and facilitates further movement across the cell wall. This chain is Movement protein BC1, found in Manihot esculenta (Cassava).